Reading from the N-terminus, the 154-residue chain is Ribonuclease 8 (154 aa).

A signal peptide spans 1–27 (MAPARAGCCPLLLLLLGLRVAQIPVSA). Residue His42 is the Proton acceptor of the active site. 3 cysteine pairs are disulfide-bonded: Cys64–Cys118, Cys82–Cys133, and Cys89–Cys96. Residues 65–69 (KDLNT) and Lys90 contribute to the substrate site. Residue His149 is the Proton donor of the active site.

The protein belongs to the pancreatic ribonuclease family.

The protein localises to the secreted. In terms of biological role, has a low ribonuclease activity. The polypeptide is Ribonuclease 8 (RNASE8) (Miopithecus talapoin (Angolan talapoin)).